A 489-amino-acid chain; its full sequence is Adenosylhomocysteinase (489 aa).

Substrate is bound by residues Thr-68, Asp-151, and Glu-213. 214-216 lines the NAD(+) pocket; sequence TTT. Residues Lys-243 and Asp-247 each coordinate substrate. NAD(+)-binding positions include Asn-248, 277–282, Glu-300, Asn-335, 356–358, and Asn-403; these read GYGDVG and IGH.

It belongs to the adenosylhomocysteinase family. It depends on NAD(+) as a cofactor.

The protein localises to the cytoplasm. It carries out the reaction S-adenosyl-L-homocysteine + H2O = L-homocysteine + adenosine. The protein operates within amino-acid biosynthesis; L-homocysteine biosynthesis; L-homocysteine from S-adenosyl-L-homocysteine: step 1/1. May play a key role in the regulation of the intracellular concentration of adenosylhomocysteine. The sequence is that of Adenosylhomocysteinase from Mycobacterium sp. (strain KMS).